Reading from the N-terminus, the 1488-residue chain is Chromosome partition protein MukB (1488 aa).

34 to 41 (GGNGAGKS) lines the ATP pocket. Coiled coils occupy residues 326–418 (LEAD…QYNQ), 444–472 (LDTF…QTAH), and 509–602 (RHLA…QRAP). Residues 666-783 (PGGAEDQRLN…SLPIFGRAAR (118 aa)) are flexible hinge. 3 coiled-coil regions span residues 835–923 (EAEI…AKLE), 977–1116 (EMLS…AKAG), and 1209–1265 (VEAI…LQSV). The disordered stretch occupies residues 1049 to 1074 (ADSGAEERARQRRDELHAQLSNNRSR). Basic and acidic residues predominate over residues 1051–1065 (SGAEERARQRRDELH).

This sequence belongs to the SMC family. MukB subfamily. As to quaternary structure, homodimerization via its hinge domain. Binds to DNA via its C-terminal region. Interacts, and probably forms a ternary complex, with MukE and MukF via its C-terminal region. The complex formation is stimulated by calcium or magnesium. Interacts with tubulin-related protein FtsZ.

It localises to the cytoplasm. The protein localises to the nucleoid. Its function is as follows. Plays a central role in chromosome condensation, segregation and cell cycle progression. Functions as a homodimer, which is essential for chromosome partition. Involved in negative DNA supercoiling in vivo, and by this means organize and compact chromosomes. May achieve or facilitate chromosome segregation by condensation DNA from both sides of a centrally located replisome during cell division. In Salmonella typhi, this protein is Chromosome partition protein MukB.